Reading from the N-terminus, the 312-residue chain is 4-diphosphocytidyl-2-C-methyl-D-erythritol kinase (312 aa).

The active site involves K18. 104–114 (PIAGGMGGGSA) contacts ATP. Residue D146 is part of the active site.

Belongs to the GHMP kinase family. IspE subfamily.

The catalysed reaction is 4-CDP-2-C-methyl-D-erythritol + ATP = 4-CDP-2-C-methyl-D-erythritol 2-phosphate + ADP + H(+). Its pathway is isoprenoid biosynthesis; isopentenyl diphosphate biosynthesis via DXP pathway; isopentenyl diphosphate from 1-deoxy-D-xylulose 5-phosphate: step 3/6. Functionally, catalyzes the phosphorylation of the position 2 hydroxy group of 4-diphosphocytidyl-2C-methyl-D-erythritol. The sequence is that of 4-diphosphocytidyl-2-C-methyl-D-erythritol kinase from Clavibacter michiganensis subsp. michiganensis (strain NCPPB 382).